The chain runs to 533 residues: DELLA protein GAI (533 aa).

Residues 1 to 12 (MKRDHHHHHHQD) show a composition bias toward basic residues. A disordered region spans residues 1 to 24 (MKRDHHHHHHQDKKTMMMNEEDDG). The DELLA motif signature appears at 28-32 (DELLA). Positions 50-54 (LEQLE) match the LEXLE motif motif. The short motif at 73–77 (VHYNP) is the VHYNP motif element. Residues 160-529 (VDSQENGVRL…RPLIATSAWK (370 aa)) form the GRAS domain. The tract at residues 167 to 221 (VRLVHALLACAEAVQKENLTVAEALVKQIGFLAVSQIGAMRKVATYFAEALARRI) is leucine repeat I (LRI). The short motif at 174–178 (LACAE) is the LxCxE motif element. A VHIID region spans residues 240 to 305 (QMHFYETCPY…GGPPVFRLTG (66 aa)). Residues 271–275 (VHVID) carry the VHIID motif. Positions 319-351 (EVGCKLAHLAEAIHVEFEYRGFVANTLADLDAS) are leucine repeat II (LRII). The segment at 363 to 450 (VAVNSVFELH…EVYLGKQICN (88 aa)) is PFYRE. Positions 371–375 (LHKLL) match the LXXLL motif motif. Residues 453–529 (ACDGPDRVER…RPLIATSAWK (77 aa)) are SAW.

Belongs to the GRAS family. DELLA subfamily. In terms of assembly, interacts directly with the GID2/SLY1 component of the SCF(GID2) complex. Interacts (via N-terminus) with GID1A, GID1B and GID1B (via N-terminus). Interacts with the BOI proteins BOI, BRG1, BRG2, BRG3 and NUP58. Interacts with TOPP4. Interacts with TCP14 and TCP15. Interacts with FLZ5. Binds to and coactivates GAF1/IDD2 and ENY/IDD1 at the promoter of GA20OX2 gene. Binds to PDF2 and ATML1. Interacts with the prefoldin alpha subunits PFD3 and PFD5 in the nucleus. Post-translationally, phosphorylated. Gibberellin (GA) induces dephosphorylation of GAI by TOPP4 and subsequent degradation by the proteasomal pathway. In terms of processing, may be ubiquitinated, as suggested by its interaction with GID2. Ubiquitination is however unsure since in contrast to other DELLA proteins, it is not ubiquitinated and degraded upon GA application. Nevertheless, ubiquitination may be triggered by other processes. As to expression, ubiquitously expressed. Expressed in rosette leaves, roots, stems and inflorescences of greenhouse grown.

It localises to the nucleus. Transcription activation is repressed by gibberellic acid GA(3) in the presence of TPR4. Its function is as follows. Transcriptional regulator that acts as a repressor of the gibberellin (GA) signaling pathway. Transcription coactivator of the zinc finger transcription factors GAF1/IDD2 and ENY/IDD1 in regulation of gibberellin homeostasis and signaling. No effect of the BOI proteins on its stability. Probably acts by participating in large multiprotein complexes that repress transcription of GA-inducible genes. Positively regulates XERICO expression. In contrast to RGA, it is less sensitive to GA. Its activity is probably regulated by other phytohormones such as auxin and ethylene. Involved in the regulation of seed dormancy and germination, including glucose-induced delay of seed germination. Involved in the process leading to microtubules (MTs) dissociation in response to gibberellic acid (GA) probably by mediating the translocation of the prefoldin co-chaperone complex from the cytoplasm to the nucleus. The protein is DELLA protein GAI of Arabidopsis thaliana (Mouse-ear cress).